A 109-amino-acid chain; its full sequence is Protein ripply2 (109 aa).

The segment covering 1–15 (MENITFTSGLNSEMD) has biased composition (polar residues). Disordered regions lie at residues 1–42 (MENI…RPAD) and 88–109 (YEDP…KELR). Residues 20-23 (WRPW) carry the WRPW motif motif. The span at 30–42 (KAPDYKPYKRPAD) shows a compositional bias: basic and acidic residues. The ripply homology domain stretch occupies residues 53-88 (HPVKLFWPKSQCFDYLYEDAEVLLRNYPVQATICLY). The segment covering 89–109 (EDPDTEDEEDYSDEEDEKELR) has biased composition (acidic residues).

Belongs to the ripply family. As to expression, first expressed in the paraxial mesoderm at the 90% epiboly stage, and subsequently confined to the presomitic mesoderm. Expressed in the rostral compartment of S-I and S-II.

The protein localises to the nucleus. Plays a role in somitogenesis. Required for somite segregation and establishment of rostrocaudal polarity in somites. This chain is Protein ripply2, found in Danio rerio (Zebrafish).